Consider the following 116-residue polypeptide: Phosphoribosyl-AMP cyclohydrolase (116 aa).

Residue Asp85 coordinates Mg(2+). Residue Cys86 coordinates Zn(2+). Mg(2+) is bound by residues Asp87 and Asp89. Zn(2+) contacts are provided by Cys102 and Cys109.

Belongs to the PRA-CH family. In terms of assembly, homodimer. Requires Mg(2+) as cofactor. Zn(2+) is required as a cofactor.

It is found in the cytoplasm. It carries out the reaction 1-(5-phospho-beta-D-ribosyl)-5'-AMP + H2O = 1-(5-phospho-beta-D-ribosyl)-5-[(5-phospho-beta-D-ribosylamino)methylideneamino]imidazole-4-carboxamide. It participates in amino-acid biosynthesis; L-histidine biosynthesis; L-histidine from 5-phospho-alpha-D-ribose 1-diphosphate: step 3/9. Its function is as follows. Catalyzes the hydrolysis of the adenine ring of phosphoribosyl-AMP. The protein is Phosphoribosyl-AMP cyclohydrolase of Thermobifida fusca (strain YX).